The primary structure comprises 420 residues: UDP-N-acetyl-D-mannosamine dehydrogenase (420 aa).

NAD(+) contacts are provided by Tyr13, Ile14, Asp33, Thr85, and Thr126. UDP-N-acetyl-alpha-D-mannosaminouronate contacts are provided by Arg160, Val161, Lys212, Asn216, Arg219, His250, Arg252, and Gly263. The active-site Proton donor/acceptor is the Lys212. Cys266 functions as the Nucleophile in the catalytic mechanism. Residues Phe330 and Lys331 each contribute to the UDP-N-acetyl-alpha-D-mannosaminouronate site. Residue Arg338 participates in NAD(+) binding. Lys416 serves as a coordination point for UDP-N-acetyl-alpha-D-mannosaminouronate.

Belongs to the UDP-glucose/GDP-mannose dehydrogenase family. WecC subfamily. In terms of assembly, homodimer.

The enzyme catalyses UDP-N-acetyl-alpha-D-mannosamine + 2 NAD(+) + H2O = UDP-N-acetyl-alpha-D-mannosaminouronate + 2 NADH + 3 H(+). Its pathway is bacterial outer membrane biogenesis; enterobacterial common antigen biosynthesis. Catalyzes the four-electron oxidation of UDP-N-acetyl-D-mannosamine (UDP-ManNAc), reducing NAD(+) and releasing UDP-N-acetylmannosaminuronic acid (UDP-ManNAcA). The chain is UDP-N-acetyl-D-mannosamine dehydrogenase from Salmonella typhi.